We begin with the raw amino-acid sequence, 327 residues long: MLTYPPVKKVSVVIPVYNEQDSLPELLRRTDAACATLGRQYEILLIDDGSSDDSARMLTEAAEAEGSHVVAVLLNRNYGQHSAIMAGFSHVTGDLIITLDADLQNPPEEIPRLVAKADEGYDVVGTVRQNRQDSIFRKTASKMINRLIQRTTGKAMGDYGCMLRAYRRHIIDAMLNCHERSTFIPILANTFARRAVEIPVMHAEREFGDSKYSFMRLINLMYDLVTCLTTTPLRLLSIFGSVIALLGFAFGLLLVVLRLAFGPQWAAEGVFMLFAVLFMFIGAQFVGMGLLGEYIGRIYNDVRARPRYFIQRVVRQPETASKEEDRS.

Helical transmembrane passes span Leu236 to Val256 and Val270 to Leu290.

The protein belongs to the glycosyltransferase 2 family.

It is found in the cell inner membrane. It catalyses the reaction UDP-4-deoxy-4-formamido-beta-L-arabinose + di-trans,octa-cis-undecaprenyl phosphate = 4-deoxy-4-formamido-alpha-L-arabinopyranosyl di-trans,octa-cis-undecaprenyl phosphate + UDP. The protein operates within glycolipid biosynthesis; 4-amino-4-deoxy-alpha-L-arabinose undecaprenyl phosphate biosynthesis; 4-amino-4-deoxy-alpha-L-arabinose undecaprenyl phosphate from UDP-4-deoxy-4-formamido-beta-L-arabinose and undecaprenyl phosphate: step 1/2. Its pathway is bacterial outer membrane biogenesis; lipopolysaccharide biosynthesis. In terms of biological role, catalyzes the transfer of 4-deoxy-4-formamido-L-arabinose from UDP to undecaprenyl phosphate. The modified arabinose is attached to lipid A and is required for resistance to polymyxin and cationic antimicrobial peptides. The sequence is that of Undecaprenyl-phosphate 4-deoxy-4-formamido-L-arabinose transferase from Klebsiella pneumoniae subsp. pneumoniae (strain ATCC 700721 / MGH 78578).